A 125-amino-acid polypeptide reads, in one-letter code: Small ribosomal subunit protein uS13 (125 aa).

Positions 95–125 (GLPVNGQRTRTNARTRKGGKKTVANKKKVTK) are disordered. Residues 105 to 125 (TNARTRKGGKKTVANKKKVTK) show a composition bias toward basic residues.

It belongs to the universal ribosomal protein uS13 family. Part of the 30S ribosomal subunit. Forms a loose heterodimer with protein S19. Forms two bridges to the 50S subunit in the 70S ribosome.

In terms of biological role, located at the top of the head of the 30S subunit, it contacts several helices of the 16S rRNA. In the 70S ribosome it contacts the 23S rRNA (bridge B1a) and protein L5 of the 50S subunit (bridge B1b), connecting the 2 subunits; these bridges are implicated in subunit movement. Contacts the tRNAs in the A and P-sites. In Leptospira interrogans serogroup Icterohaemorrhagiae serovar copenhageni (strain Fiocruz L1-130), this protein is Small ribosomal subunit protein uS13.